The chain runs to 261 residues: MVRRSVTLPQLQAKKALGEPITMLTAWDYLWARLLDAAGVDVILVGDSLGMVALGYPTTLPVTLDQMIHHAQAVRRGVSHSFLVCDLPFLSYQESPEQALRSAGRLIKEAEVQAVKMEGASPVVQAATRRLVEAGIPVLGHVGLLPQRVHQLGGWRQQGNTPQDAAAILAGALALAEAGVFAVILEHIPAALAQQITAQLKIPTIGIGAGPHCDGQVLVTADVLGLSPQVPPFAKVYADLGTQAIAAIENYCQAVKSRQFP.

2 residues coordinate Mg(2+): Asp47 and Asp86. Residues 47 to 48 (DS), Asp86, and Lys116 contribute to the 3-methyl-2-oxobutanoate site. Glu118 contacts Mg(2+). Glu186 serves as the catalytic Proton acceptor.

It belongs to the PanB family. Homodecamer; pentamer of dimers. Requires Mg(2+) as cofactor.

The protein localises to the cytoplasm. It carries out the reaction 3-methyl-2-oxobutanoate + (6R)-5,10-methylene-5,6,7,8-tetrahydrofolate + H2O = 2-dehydropantoate + (6S)-5,6,7,8-tetrahydrofolate. It participates in cofactor biosynthesis; (R)-pantothenate biosynthesis; (R)-pantoate from 3-methyl-2-oxobutanoate: step 1/2. Its function is as follows. Catalyzes the reversible reaction in which hydroxymethyl group from 5,10-methylenetetrahydrofolate is transferred onto alpha-ketoisovalerate to form ketopantoate. The polypeptide is 3-methyl-2-oxobutanoate hydroxymethyltransferase (Thermosynechococcus vestitus (strain NIES-2133 / IAM M-273 / BP-1)).